Reading from the N-terminus, the 442-residue chain is 5-methylthioadenosine/S-adenosylhomocysteine deaminase (442 aa).

Residues H70 and H72 each contribute to the Zn(2+) site. E99 and H191 together coordinate substrate. H218 contacts Zn(2+). Substrate-binding residues include E221 and D306. D306 contacts Zn(2+).

Belongs to the metallo-dependent hydrolases superfamily. MTA/SAH deaminase family. Requires Zn(2+) as cofactor.

The enzyme catalyses S-adenosyl-L-homocysteine + H2O + H(+) = S-inosyl-L-homocysteine + NH4(+). The catalysed reaction is S-methyl-5'-thioadenosine + H2O + H(+) = S-methyl-5'-thioinosine + NH4(+). In terms of biological role, catalyzes the deamination of 5-methylthioadenosine and S-adenosyl-L-homocysteine into 5-methylthioinosine and S-inosyl-L-homocysteine, respectively. Is also able to deaminate adenosine. This chain is 5-methylthioadenosine/S-adenosylhomocysteine deaminase, found in Nitratidesulfovibrio vulgaris (strain ATCC 29579 / DSM 644 / CCUG 34227 / NCIMB 8303 / VKM B-1760 / Hildenborough) (Desulfovibrio vulgaris).